We begin with the raw amino-acid sequence, 236 residues long: Phospholipid hydroperoxide glutathione peroxidase 1, chloroplastic (236 aa).

The segment covering Met-1–Thr-16 has biased composition (low complexity). Residues Met-1–Asn-24 form a disordered region. The transit peptide at Met-1–Ser-64 directs the protein to the chloroplast. Residue Cys-111 is part of the active site.

Belongs to the glutathione peroxidase family. As to expression, expressed in leaves, stems, flowers, green siliques and seeds.

The protein localises to the plastid. The protein resides in the chloroplast. It carries out the reaction a hydroperoxy polyunsaturated fatty acid + 2 glutathione = a hydroxy polyunsaturated fatty acid + glutathione disulfide + H2O. Protects cells and enzymes from oxidative damage, by catalyzing the reduction of hydrogen peroxide, lipid peroxides and organic hydroperoxide, by glutathione. In Arabidopsis thaliana (Mouse-ear cress), this protein is Phospholipid hydroperoxide glutathione peroxidase 1, chloroplastic (GPX1).